Reading from the N-terminus, the 307-residue chain is Elongation factor Ts (307 aa).

The involved in Mg(2+) ion dislocation from EF-Tu stretch occupies residues 80-83 (TDFV).

The protein belongs to the EF-Ts family.

It is found in the cytoplasm. Functionally, associates with the EF-Tu.GDP complex and induces the exchange of GDP to GTP. It remains bound to the aminoacyl-tRNA.EF-Tu.GTP complex up to the GTP hydrolysis stage on the ribosome. This is Elongation factor Ts from Rhizorhabdus wittichii (strain DSM 6014 / CCUG 31198 / JCM 15750 / NBRC 105917 / EY 4224 / RW1) (Sphingomonas wittichii).